Consider the following 152-residue polypeptide: Superoxide dismutase [Cu-Zn] 4AP (152 aa).

His45, His47, and His62 together coordinate Cu cation. The cysteines at positions 56 and 145 are disulfide-linked. Zn(2+) is bound by residues His62, His70, His79, and Asp82. Residue His119 participates in Cu cation binding.

The protein belongs to the Cu-Zn superoxide dismutase family. In terms of assembly, homodimer. Requires Cu cation as cofactor. Zn(2+) is required as a cofactor.

It is found in the cytoplasm. It catalyses the reaction 2 superoxide + 2 H(+) = H2O2 + O2. Destroys radicals which are normally produced within the cells and which are toxic to biological systems. This is Superoxide dismutase [Cu-Zn] 4AP (SODCC.2) from Zea mays (Maize).